Consider the following 121-residue polypeptide: Large ribosomal subunit protein bL12 (121 aa).

The protein belongs to the bacterial ribosomal protein bL12 family. In terms of assembly, homodimer. Part of the ribosomal stalk of the 50S ribosomal subunit. Forms a multimeric L10(L12)X complex, where L10 forms an elongated spine to which 2 to 4 L12 dimers bind in a sequential fashion. Binds GTP-bound translation factors.

Functionally, forms part of the ribosomal stalk which helps the ribosome interact with GTP-bound translation factors. Is thus essential for accurate translation. The sequence is that of Large ribosomal subunit protein bL12 from Shigella sonnei (strain Ss046).